Reading from the N-terminus, the 234-residue chain is Phosphoribosylaminoimidazole-succinocarboxamide synthase (234 aa).

The protein belongs to the SAICAR synthetase family.

It catalyses the reaction 5-amino-1-(5-phospho-D-ribosyl)imidazole-4-carboxylate + L-aspartate + ATP = (2S)-2-[5-amino-1-(5-phospho-beta-D-ribosyl)imidazole-4-carboxamido]succinate + ADP + phosphate + 2 H(+). It participates in purine metabolism; IMP biosynthesis via de novo pathway; 5-amino-1-(5-phospho-D-ribosyl)imidazole-4-carboxamide from 5-amino-1-(5-phospho-D-ribosyl)imidazole-4-carboxylate: step 1/2. The sequence is that of Phosphoribosylaminoimidazole-succinocarboxamide synthase from Clostridium botulinum (strain ATCC 19397 / Type A).